Reading from the N-terminus, the 137-residue chain is Active regulator of SIRT1 (137 aa).

R7 is modified (citrulline). Positions 14–24 (GAPEAPGAAPG) are enriched in low complexity. Positions 14–58 (GAPEAPGAAPGHTKPSQAPMKRTRKAKATQAQKLRNSAKGKVPKS) are disordered. S84 is subject to Phosphoserine. Residues 96–120 (RQNRGRKACDRPVTKTKKKKKAEGT) form a disordered region.

This sequence belongs to the AROS family. In terms of assembly, part of the small subunit (SSU) processome, composed of more than 70 proteins and the RNA chaperone small nucleolar RNA (snoRNA) U3. Interacts with RPS19; the interaction is direct and mediates the integration of RPS19 in state post-A1. Interacts with SIRT1. Post-translationally, citrullinated by PADI4.

The protein resides in the nucleus. Its subcellular location is the nucleolus. Functionally, part of the small subunit (SSU) processome, first precursor of the small eukaryotic ribosomal subunit. During the assembly of the SSU processome in the nucleolus, many ribosome biogenesis factors, an RNA chaperone and ribosomal proteins associate with the nascent pre-rRNA and work in concert to generate RNA folding, modifications, rearrangements and cleavage as well as targeted degradation of pre-ribosomal RNA by the RNA exosome. Acts as a chaperone that specifically mediates the integration of RPS19 in state post-A1. Direct regulator of SIRT1. Enhances SIRT1-mediated deacetylation of p53/TP53, thereby participating in inhibition of p53/TP53-mediated transcriptional activity. This chain is Active regulator of SIRT1 (RPS19BP1), found in Bos taurus (Bovine).